Here is a 462-residue protein sequence, read N- to C-terminus: Argininosuccinate lyase (462 aa).

This sequence belongs to the lyase 1 family. Argininosuccinate lyase subfamily.

It localises to the cytoplasm. The catalysed reaction is 2-(N(omega)-L-arginino)succinate = fumarate + L-arginine. It functions in the pathway amino-acid biosynthesis; L-arginine biosynthesis; L-arginine from L-ornithine and carbamoyl phosphate: step 3/3. This chain is Argininosuccinate lyase, found in Bacillus cereus (strain B4264).